Here is a 466-residue protein sequence, read N- to C-terminus: Ribulose bisphosphate carboxylase large chain (466 aa).

Lys5 bears the N6,N6,N6-trimethyllysine mark. Substrate is bound by residues Asn114 and Thr164. Catalysis depends on Lys166, which acts as the Proton acceptor. Lys168 provides a ligand contact to substrate. Mg(2+) is bound by residues Lys192, Asp194, and Glu195. At Lys192 the chain carries N6-carboxylysine. His285 acts as the Proton acceptor in catalysis. Substrate contacts are provided by Arg286, His318, and Ser370.

This sequence belongs to the RuBisCO large chain family. Type I subfamily. Heterohexadecamer of 8 large chains and 8 small chains; disulfide-linked. The disulfide link is formed within the large subunit homodimers. Requires Mg(2+) as cofactor. Post-translationally, the disulfide bond which can form in the large chain dimeric partners within the hexadecamer appears to be associated with oxidative stress and protein turnover.

The protein localises to the plastid. It localises to the chloroplast. It catalyses the reaction 2 (2R)-3-phosphoglycerate + 2 H(+) = D-ribulose 1,5-bisphosphate + CO2 + H2O. The enzyme catalyses D-ribulose 1,5-bisphosphate + O2 = 2-phosphoglycolate + (2R)-3-phosphoglycerate + 2 H(+). RuBisCO catalyzes two reactions: the carboxylation of D-ribulose 1,5-bisphosphate, the primary event in carbon dioxide fixation, as well as the oxidative fragmentation of the pentose substrate in the photorespiration process. Both reactions occur simultaneously and in competition at the same active site. The sequence is that of Ribulose bisphosphate carboxylase large chain from Coriaria myrtifolia (Tanner's sumac).